A 448-amino-acid chain; its full sequence is Phosphoglucosamine mutase (448 aa).

Residue Ser-100 is the Phosphoserine intermediate of the active site. 4 residues coordinate Mg(2+): Ser-100, Asp-240, Asp-242, and Asp-244. Phosphoserine is present on Ser-100.

This sequence belongs to the phosphohexose mutase family. Mg(2+) serves as cofactor. In terms of processing, activated by phosphorylation.

The enzyme catalyses alpha-D-glucosamine 1-phosphate = D-glucosamine 6-phosphate. Its function is as follows. Catalyzes the conversion of glucosamine-6-phosphate to glucosamine-1-phosphate. The chain is Phosphoglucosamine mutase from Clostridium perfringens (strain SM101 / Type A).